We begin with the raw amino-acid sequence, 74 residues long: ATP synthase subunit 9, mitochondrial (74 aa).

2 consecutive transmembrane segments (helical) span residues 8 to 28 (IGAGAATIALAGAAVGIGNVF) and 50 to 70 (ILGFALTEAIALFALMMAFLI).

This sequence belongs to the ATPase C chain family. F-type ATPases have 2 components, CF(1) - the catalytic core - and CF(0) - the membrane proton channel. CF(1) has five subunits: alpha(3), beta(3), gamma(1), delta(1), epsilon(1). CF(0) has three main subunits: a, b and c.

The protein localises to the mitochondrion membrane. Functionally, this protein is one of the chains of the nonenzymatic membrane component (F0) of mitochondrial ATPase. The sequence is that of ATP synthase subunit 9, mitochondrial (ATP9) from Triticum aestivum (Wheat).